The primary structure comprises 399 residues: Lipoyl synthase, mitochondrial (399 aa).

A mitochondrion-targeting transit peptide spans 1 to 14 (MALISRSCGAASRY). Over residues 39–52 (AASTSSSSSPSPST) the composition is skewed to low complexity. A disordered region spans residues 39 to 60 (AASTSSSSSPSPSTHNDRKKDL). [4Fe-4S] cluster-binding residues include C128, C133, C139, C159, C163, C166, and S374. Residues 144-363 (EYATATATIM…EKVGQEMGFI (220 aa)) form the Radical SAM core domain.

It belongs to the radical SAM superfamily. Lipoyl synthase family. The cofactor is [4Fe-4S] cluster.

It localises to the mitochondrion. It carries out the reaction [[Fe-S] cluster scaffold protein carrying a second [4Fe-4S](2+) cluster] + N(6)-octanoyl-L-lysyl-[protein] + 2 oxidized [2Fe-2S]-[ferredoxin] + 2 S-adenosyl-L-methionine + 4 H(+) = [[Fe-S] cluster scaffold protein] + N(6)-[(R)-dihydrolipoyl]-L-lysyl-[protein] + 4 Fe(3+) + 2 hydrogen sulfide + 2 5'-deoxyadenosine + 2 L-methionine + 2 reduced [2Fe-2S]-[ferredoxin]. It functions in the pathway protein modification; protein lipoylation via endogenous pathway; protein N(6)-(lipoyl)lysine from octanoyl-[acyl-carrier-protein]: step 2/2. Catalyzes the radical-mediated insertion of two sulfur atoms into the C-6 and C-8 positions of the octanoyl moiety bound to the lipoyl domains of lipoate-dependent enzymes, thereby converting the octanoylated domains into lipoylated derivatives. In Danio rerio (Zebrafish), this protein is Lipoyl synthase, mitochondrial (lias).